Reading from the N-terminus, the 513-residue chain is ATP synthase subunit alpha (513 aa).

169 to 176 provides a ligand contact to ATP; sequence GDRQTGKT.

Belongs to the ATPase alpha/beta chains family. As to quaternary structure, F-type ATPases have 2 components, CF(1) - the catalytic core - and CF(0) - the membrane proton channel. CF(1) has five subunits: alpha(3), beta(3), gamma(1), delta(1), epsilon(1). CF(0) has three main subunits: a(1), b(2) and c(9-12). The alpha and beta chains form an alternating ring which encloses part of the gamma chain. CF(1) is attached to CF(0) by a central stalk formed by the gamma and epsilon chains, while a peripheral stalk is formed by the delta and b chains.

It localises to the cell inner membrane. It carries out the reaction ATP + H2O + 4 H(+)(in) = ADP + phosphate + 5 H(+)(out). Functionally, produces ATP from ADP in the presence of a proton gradient across the membrane. The alpha chain is a regulatory subunit. This Aliivibrio fischeri (strain ATCC 700601 / ES114) (Vibrio fischeri) protein is ATP synthase subunit alpha.